Consider the following 1141-residue polypeptide: cGMP-inhibited 3',5'-cyclic phosphodiesterase 3A (1141 aa).

The interval 1–42 is disordered; sequence MAVPGDAARVRDKPVHSGVSQAPTAGRDCHHRADPASPRDSG. 6 helical membrane passes run 61 to 81, 130 to 150, 160 to 180, 185 to 205, 210 to 230, and 232 to 252; these read LSSA…VRLV, LQPS…GLYL, AVAL…GLGV, LLSL…TWLV, LGVL…ISLE, and FKVA…ILLA. Phosphoserine is present on Ser-312. Phosphoserine; by PKA and PKC is present on residues Ser-428 and Ser-438. Residues 436–448 show a composition bias toward low complexity; that stretch reads RVSSTWTTTTSAT. The segment at 436-482 is disordered; it reads RVSSTWTTTTSATGLPTLEPAPVRRDRSTSIKLQEAPSSSPDSWNNP. Residues 465 to 482 show a composition bias toward polar residues; it reads SIKLQEAPSSSPDSWNNP. A phosphoserine mark is found at Ser-492, Ser-520, and Ser-524. Residues 590–640 form a disordered region; sequence RPYSQGNPADEPLERSGVATRTPSRTDDTAQVTSDYETNNNSDSSDIVQNE. The segment covering 608 to 637 has biased composition (polar residues); the sequence is ATRTPSRTDDTAQVTSDYETNNNSDSSDIV. An interaction with SLFN12 region spans residues 669 to 1141; that stretch reads KPILAPEPLV…EEIPTQKPDQ (473 aa). The region spanning 674-1093 is the PDEase domain; the sequence is PEPLVMDNLD…KMWKKVIEEE (420 aa). Residue His-752 is the Proton donor of the active site. An AMP-binding site is contributed by His-752. 4 residues coordinate Mn(2+): His-756, His-836, Asp-837, and Asp-950. Residues Asp-837, Asp-950, and Gln-1001 each coordinate AMP. Asp-837 contributes to the Mg(2+) binding site. Disordered stretches follow at residues 1023–1062 and 1100–1141; these read PGKW…ESPK and ENQS…KPDQ. Positions 1029-1056 are enriched in acidic residues; it reads DSDESGDTDDPEEEEEEAPAPNEEETCE. Ser-1033 carries the post-translational modification Phosphoserine. At Thr-1036 the chain carries Phosphothreonine. Positions 1100–1113 are enriched in polar residues; sequence ENQSLDQTPQSHSS. Residue Lys-1120 forms a Glycyl lysine isopeptide (Lys-Gly) (interchain with G-Cter in SUMO2) linkage. A compositionally biased stretch (basic and acidic residues) spans 1125–1141; that stretch reads EKGKPRGEEIPTQKPDQ.

The protein belongs to the cyclic nucleotide phosphodiesterase family. PDE3 subfamily. In terms of assembly, homodimer. Interacts with SLFN12; direct low affinity interaction which is stimulated by binding of 17beta-estradiol/E2 to PDE3A and that positively regulates the ribonuclease activity of SLFN12. The cofactor is Mn(2+). Mg(2+) serves as cofactor.

The protein resides in the membrane. The protein localises to the cytoplasm. It localises to the cytosol. It catalyses the reaction a nucleoside 3',5'-cyclic phosphate + H2O = a nucleoside 5'-phosphate + H(+). It carries out the reaction 3',5'-cyclic AMP + H2O = AMP + H(+). The catalysed reaction is 3',5'-cyclic GMP + H2O = GMP + H(+). The enzyme catalyses 3',5'-cyclic UMP + H2O = UMP + H(+). Its activity is regulated as follows. Inhibited by cGMP. Inhibited by 17beta-estradiol. Inhibited by milrinone. Cyclic nucleotide phosphodiesterase with specificity for the second messengers cAMP and cGMP, which are key regulators of many important physiological processes. Also has activity toward cUMP. Independently of its catalytic activity it is part of an E2/17beta-estradiol-induced pro-apoptotic signaling pathway. E2 stabilizes the PDE3A/SLFN12 complex in the cytosol, promoting the dephosphorylation of SLFN12 and activating its pro-apoptotic ribosomal RNA/rRNA ribonuclease activity. This apoptotic pathway might be relevant in tissues with high concentration of E2 and be for instance involved in placenta remodeling. The sequence is that of cGMP-inhibited 3',5'-cyclic phosphodiesterase 3A from Homo sapiens (Human).